Reading from the N-terminus, the 88-residue chain is Small ribosomal subunit protein uS15 (88 aa).

This sequence belongs to the universal ribosomal protein uS15 family. Part of the 30S ribosomal subunit. Forms a bridge to the 50S subunit in the 70S ribosome, contacting the 23S rRNA.

In terms of biological role, one of the primary rRNA binding proteins, it binds directly to 16S rRNA where it helps nucleate assembly of the platform of the 30S subunit by binding and bridging several RNA helices of the 16S rRNA. Forms an intersubunit bridge (bridge B4) with the 23S rRNA of the 50S subunit in the ribosome. The polypeptide is Small ribosomal subunit protein uS15 (Finegoldia magna (strain ATCC 29328 / DSM 20472 / WAL 2508) (Peptostreptococcus magnus)).